Consider the following 119-residue polypeptide: Large ribosomal subunit protein uL18 (119 aa).

It belongs to the universal ribosomal protein uL18 family. Part of the 50S ribosomal subunit; part of the 5S rRNA/L5/L18/L25 subcomplex. Contacts the 5S and 23S rRNAs.

Its function is as follows. This is one of the proteins that bind and probably mediate the attachment of the 5S RNA into the large ribosomal subunit, where it forms part of the central protuberance. This chain is Large ribosomal subunit protein uL18, found in Cereibacter sphaeroides (strain ATCC 17029 / ATH 2.4.9) (Rhodobacter sphaeroides).